The primary structure comprises 218 residues: Elongation factor Ts (218 aa).

The segment at 82–85 (TDFV) is involved in Mg(2+) ion dislocation from EF-Tu.

This sequence belongs to the EF-Ts family.

It is found in the cytoplasm. Functionally, associates with the EF-Tu.GDP complex and induces the exchange of GDP to GTP. It remains bound to the aminoacyl-tRNA.EF-Tu.GTP complex up to the GTP hydrolysis stage on the ribosome. The protein is Elongation factor Ts of Prochlorococcus marinus (strain MIT 9303).